The following is a 146-amino-acid chain: Hemoglobin subunit beta-A/B (146 aa).

Gly-1 carries the post-translational modification N-acetylserine; in variant beta-B. Positions 2–146 (FLTAEEKGLV…VANALAHKYH (145 aa)) constitute a Globin domain. Position 44 is a phosphoserine (Ser-44). Residue Lys-59 is modified to N6-acetyllysine. His-63 contacts heme b. Lys-82 carries the post-translational modification N6-acetyllysine. His-92 serves as a coordination point for heme b. Position 93 is an S-nitrosocysteine (Cys-93). An N6-acetyllysine modification is found at Lys-144.

Belongs to the globin family. In terms of assembly, heterotetramer of two alpha chains and two beta chains. In terms of tissue distribution, red blood cells.

Functionally, involved in oxygen transport from the lung to the various peripheral tissues. The polypeptide is Hemoglobin subunit beta-A/B (HBB) (Felis catus (Cat)).